Reading from the N-terminus, the 207-residue chain is MLRVLGLAGMLMSFNIHAAMISPVSGVKILFANGTEVDEPLEPMEVDAKSAQLVVRYAAELGSGSNQKVFDSAPFVITIDNLSEDIKLYPPKVFSYEQANREFNTSPKWRIEGVSGKEISYSQEKLKGNEGFMPYYGMEALIAKHNEERGIVFSAGVVKAEVVTTDKMVEKPATTKNADALVQLQHWYKQASTEERKAFRKWMVDQE.

Positions 1-18 are cleaved as a signal peptide; the sequence is MLRVLGLAGMLMSFNIHA.

This sequence belongs to the UPF0319 family.

The polypeptide is UPF0319 protein VV1_2115 (Vibrio vulnificus (strain CMCP6)).